Here is a 362-residue protein sequence, read N- to C-terminus: 3-dehydroquinate synthase (362 aa).

NAD(+) contacts are provided by residues 70-75 (DGEQYK), 104-108 (GVIGD), 128-129 (TT), K141, and K150. Zn(2+) is bound by residues E183, H246, and H263.

This sequence belongs to the sugar phosphate cyclases superfamily. Dehydroquinate synthase family. NAD(+) is required as a cofactor. The cofactor is Co(2+). It depends on Zn(2+) as a cofactor.

The protein resides in the cytoplasm. It catalyses the reaction 7-phospho-2-dehydro-3-deoxy-D-arabino-heptonate = 3-dehydroquinate + phosphate. It functions in the pathway metabolic intermediate biosynthesis; chorismate biosynthesis; chorismate from D-erythrose 4-phosphate and phosphoenolpyruvate: step 2/7. In terms of biological role, catalyzes the conversion of 3-deoxy-D-arabino-heptulosonate 7-phosphate (DAHP) to dehydroquinate (DHQ). The chain is 3-dehydroquinate synthase from Pasteurella multocida (strain Pm70).